The chain runs to 240 residues: UDP-2,3-diacylglucosamine hydrolase (240 aa).

Mn(2+)-binding residues include Asp-8, His-10, Asp-41, Asn-79, and His-114. 79–80 (NR) provides a ligand contact to substrate. Positions 122, 160, 164, 167, and 195 each coordinate substrate. 2 residues coordinate Mn(2+): His-195 and His-197.

It belongs to the LpxH family. Mn(2+) serves as cofactor.

It is found in the cell inner membrane. It catalyses the reaction UDP-2-N,3-O-bis[(3R)-3-hydroxytetradecanoyl]-alpha-D-glucosamine + H2O = 2-N,3-O-bis[(3R)-3-hydroxytetradecanoyl]-alpha-D-glucosaminyl 1-phosphate + UMP + 2 H(+). Its pathway is glycolipid biosynthesis; lipid IV(A) biosynthesis; lipid IV(A) from (3R)-3-hydroxytetradecanoyl-[acyl-carrier-protein] and UDP-N-acetyl-alpha-D-glucosamine: step 4/6. Its function is as follows. Hydrolyzes the pyrophosphate bond of UDP-2,3-diacylglucosamine to yield 2,3-diacylglucosamine 1-phosphate (lipid X) and UMP by catalyzing the attack of water at the alpha-P atom. Involved in the biosynthesis of lipid A, a phosphorylated glycolipid that anchors the lipopolysaccharide to the outer membrane of the cell. This is UDP-2,3-diacylglucosamine hydrolase from Klebsiella pneumoniae subsp. pneumoniae (strain ATCC 700721 / MGH 78578).